The chain runs to 969 residues: Squamosa promoter-binding-like protein 6 (969 aa).

2 disordered regions span residues Met-1–Arg-25 and Glu-54–Arg-81. Residues Ala-55–Ser-74 show a composition bias toward low complexity. The SBP-type zinc-finger motif lies at Gly-149–Thr-226. Cys-152, Cys-157, Cys-174, His-177, Cys-193, Cys-196, His-200, and Cys-212 together coordinate Zn(2+). Positions Lys-209 to Lys-225 match the Bipartite nuclear localization signal motif. The tract at residues Gly-377–Asp-434 is disordered. The segment covering Phe-393–Asn-419 has biased composition (polar residues). A compositionally biased stretch (low complexity) spans Ser-420–Ser-431.

Ubiquitous.

The protein localises to the nucleus. Functionally, trans-acting factor that binds specifically to the consensus nucleotide sequence 5'-TNCGTACAA-3'. This is Squamosa promoter-binding-like protein 6 (SPL6) from Oryza sativa subsp. japonica (Rice).